Consider the following 287-residue polypeptide: MEGKEEDVRVGANKFPERQPIGTSAQSTDKDYKEPPPAPLFEPGELSSWSFYRAGIAEFIATFLFLYITVLTVMGVKRAPNMCASVGIQGIAWAFGGMIFALVYCTAGISGGHINPAVTFGLFLARKLSLTRAVFYMIMQCLGAICGAGVVKGFQPTPYQTLGGGANTVAHGYTKGSGLGAEIIGTFVLVYTVFSATDAKRSARDSHVPILAPLPIGFAVFLVHLATIPITGTGINPARSLGAAIIYNKDHSWDDHWIFWVGPFIGAALAALYHQIVIRAIPFKSKS.

M1 carries the post-translational modification N-acetylmethionine. The interval 1–36 is disordered; sequence MEGKEEDVRVGANKFPERQPIGTSAQSTDKDYKEPP. At 1–55 the chain is on the cytoplasmic side; it reads MEGKEEDVRVGANKFPERQPIGTSAQSTDKDYKEPPPAPLFEPGELSSWSFYRAG. Residues 56–76 form a helical membrane-spanning segment; it reads IAEFIATFLFLYITVLTVMGV. Topologically, residues 77 to 92 are extracellular; sequence KRAPNMCASVGIQGIA. A helical transmembrane segment spans residues 93 to 113; it reads WAFGGMIFALVYCTAGISGGH. The Cytoplasmic portion of the chain corresponds to 114–133; sequence INPAVTFGLFLARKLSLTRA. The NPA 1 signature appears at 115–117; it reads NPA. Residues 134 to 154 traverse the membrane as a helical segment; sequence VFYMIMQCLGAICGAGVVKGF. Residues 155-175 lie on the Extracellular side of the membrane; that stretch reads QPTPYQTLGGGANTVAHGYTK. The chain crosses the membrane as a helical span at residues 176 to 196; sequence GSGLGAEIIGTFVLVYTVFSA. Over 197–209 the chain is Cytoplasmic; sequence TDAKRSARDSHVP. A helical membrane pass occupies residues 210-230; it reads ILAPLPIGFAVFLVHLATIPI. At 231 to 257 the chain is on the extracellular side; it reads TGTGINPARSLGAAIIYNKDHSWDDHW. Residues 236–238 carry the NPA 2 motif; the sequence is NPA. The helical transmembrane segment at 258 to 278 threads the bilayer; the sequence is IFWVGPFIGAALAALYHQIVI. The Cytoplasmic portion of the chain corresponds to 279-287; that stretch reads RAIPFKSKS. S285 bears the Phosphoserine mark.

This sequence belongs to the MIP/aquaporin (TC 1.A.8) family. PIP (TC 1.A.8.11) subfamily. In terms of tissue distribution, predominantly expressed in roots and green siliques. Also expressed above ground and in flower buds.

Its subcellular location is the cell membrane. In terms of biological role, aquaporins facilitate the transport of water and small neutral solutes across cell membranes. This Arabidopsis thaliana (Mouse-ear cress) protein is Probable aquaporin PIP1-4 (PIP1.4).